A 539-amino-acid chain; its full sequence is Eukaryotic translation initiation factor 3 subunit L (539 aa).

A PCI domain is found at 306–514 (TFSDILLYIQ…IHIADTKVSH (209 aa)).

The protein belongs to the eIF-3 subunit L family. As to quaternary structure, component of the eukaryotic translation initiation factor 3 (eIF-3) complex. The eIF-3 complex interacts with pix.

The protein localises to the cytoplasm. Its function is as follows. Component of the eukaryotic translation initiation factor 3 (eIF-3) complex, which is involved in protein synthesis of a specialized repertoire of mRNAs and, together with other initiation factors, stimulates binding of mRNA and methionyl-tRNAi to the 40S ribosome. The eIF-3 complex specifically targets and initiates translation of a subset of mRNAs involved in cell proliferation. This Drosophila ananassae (Fruit fly) protein is Eukaryotic translation initiation factor 3 subunit L.